A 372-amino-acid polypeptide reads, in one-letter code: Cobalt-precorrin-5B C(1)-methyltransferase (372 aa).

The protein belongs to the CbiD family.

The enzyme catalyses Co-precorrin-5B + S-adenosyl-L-methionine = Co-precorrin-6A + S-adenosyl-L-homocysteine. It functions in the pathway cofactor biosynthesis; adenosylcobalamin biosynthesis; cob(II)yrinate a,c-diamide from sirohydrochlorin (anaerobic route): step 6/10. In terms of biological role, catalyzes the methylation of C-1 in cobalt-precorrin-5B to form cobalt-precorrin-6A. In Prochlorococcus marinus subsp. pastoris (strain CCMP1986 / NIES-2087 / MED4), this protein is Cobalt-precorrin-5B C(1)-methyltransferase.